The sequence spans 266 residues: Signal peptidase I (266 aa).

Over 1 to 20 (MQTDNTKSNTNKTAKQEWGS) the chain is Cytoplasmic. The chain crosses the membrane as a helical span at residues 21–41 (FAFVICIALLIRILIMEPFTV). The Periplasmic portion of the chain corresponds to 42–266 (PTGSMKATIL…IFRNLYSTDE (225 aa)). Residues Ser45 and Lys108 contribute to the active site.

This sequence belongs to the peptidase S26 family.

It localises to the cell inner membrane. It carries out the reaction Cleavage of hydrophobic, N-terminal signal or leader sequences from secreted and periplasmic proteins.. This chain is Signal peptidase I (lepB), found in Rickettsia felis (strain ATCC VR-1525 / URRWXCal2) (Rickettsia azadi).